The following is a 220-amino-acid chain: Nucleolar protein 12 (220 aa).

Residues 31 to 86 (HKRKMQRRKTAVEEIKRKIKEEQKKMKEERHKEYMKMLKEREEALCELEENDELEE) are a coiled coil. A disordered region spans residues 109–220 (ISDLDLSGIR…QTGKTRRRRN (112 aa)). Residues 139 to 148 (EKGADEEKPK) show a composition bias toward basic and acidic residues. Basic residues-rich tracts occupy residues 176–186 (RSQRKSGKRPS) and 205–220 (KTQRRKQTGKTRRRRN).

The protein belongs to the RRP17 family.

The protein localises to the nucleus. It localises to the nucleolus. Functionally, may bind to rRNA. The sequence is that of Nucleolar protein 12 (nol12) from Xenopus laevis (African clawed frog).